The following is a 126-amino-acid chain: SH2 domain-containing protein 1A (126 aa).

The SH2 domain maps to valine 6–lysine 104. Residues glutamate 67–glutamine 92 form an interaction with FYN SH3 domain region. Lysine 89 carries the post-translational modification N6-acetyllysine. The tract at residues tyrosine 100–proline 126 is disordered.

As to quaternary structure, interacts with CD84, CD244, LY9, SLAMF1 and FYN. Interacts with NTRK1, NTRK2 and NTRK3. In terms of tissue distribution, T-cells.

The protein localises to the cytoplasm. Cytoplasmic adapter regulating receptors of the signaling lymphocytic activation molecule (SLAM) family such as SLAMF1, CD244, LY9, CD84, SLAMF6 and SLAMF7. In SLAM signaling seems to cooperate with SH2D1B/EAT-2. Initially it has been proposed that association with SLAMF1 prevents SLAMF1 binding to inhibitory effectors including INPP5D/SHIP1 and PTPN11/SHP-2. However, by simultaneous interactions, recruits FYN which subsequently phosphorylates and activates SLAMF1. Positively regulates CD244/2B4- and CD84-mediated natural killer (NK) cell functions. Can also promote CD48-, SLAMF6 -, LY9-, and SLAMF7-mediated NK cell activation. In the context of NK cell-mediated cytotoxicity enhances conjugate formation with target cells. May also regulate the activity of the neurotrophin receptors NTRK1, NTRK2 and NTRK3. The chain is SH2 domain-containing protein 1A (Sh2d1a) from Mus musculus (Mouse).